We begin with the raw amino-acid sequence, 396 residues long: Phosphoglycerate kinase (396 aa).

Substrate contacts are provided by residues 21–23 (DFN), Arg-36, 59–62 (HLGK), Arg-119, and Arg-156. Residues Lys-206, Gly-294, Glu-325, and 352 to 355 (GGDS) each bind ATP.

The protein belongs to the phosphoglycerate kinase family. As to quaternary structure, monomer.

The protein resides in the cytoplasm. The enzyme catalyses (2R)-3-phosphoglycerate + ATP = (2R)-3-phospho-glyceroyl phosphate + ADP. The protein operates within carbohydrate degradation; glycolysis; pyruvate from D-glyceraldehyde 3-phosphate: step 2/5. This is Phosphoglycerate kinase from Listeria monocytogenes serotype 4a (strain HCC23).